Consider the following 551-residue polypeptide: Podocalyxin (551 aa).

The signal sequence occupies residues 1 to 21 (MRSALALAALLLLLLSPPSLS). The disordered stretch occupies residues 18-324 (PSLSQEKSPQ…QRVSCGPPER (307 aa)). The Extracellular segment spans residues 22-452 (QEKSPQPGPT…PPEETEDRFS (431 aa)). Positions 32-59 (PMATSTSTRPAPASAPAPKSSVAASVPA) are enriched in low complexity. The span at 60–90 (EQNTTPMTTKAPATQSPSASPGSSVENSAPA) shows a compositional bias: polar residues. A compositionally biased stretch (low complexity) spans 91 to 104 (QGSTTTQQSLSVTT). Residues 142–164 (APSNHSITTKPLATEATSQAPRQ) are compositionally biased toward polar residues. N-linked (GlcNAc...) asparagine glycans are attached at residues asparagine 145 and asparagine 180. Over residues 234 to 244 (PVASSAETQGM) the composition is skewed to polar residues. The span at 289–300 (TSSSTELASTAL) shows a compositional bias: low complexity. Asparagine 333 carries N-linked (GlcNAc...) asparagine glycosylation. A helical membrane pass occupies residues 453–473 (LPLIITIVCMASFLLLVAALY). Residues 474-551 (GCCHQRLSHR…DLDEEEDTHL (78 aa)) lie on the Cytoplasmic side of the membrane. Threonine 511 carries the post-translational modification Phosphothreonine. At serine 530 the chain carries Phosphoserine. Residue threonine 549 is modified to Phosphothreonine.

It belongs to the podocalyxin family. Monomer; when associated with the membrane raft. Oligomer; when integrated in the apical membrane. Found in a complex with EZR, PODXL and NHERF2. Associates with the actin cytoskeleton through complex formation with EZR and NHERF2. Interacts (via the C-terminal PDZ-binding motif DTHL) with NHERF1 (via the PDZ domains); interaction is not detected in glomerular epithelium cells, take place early in the secretory pathway and is necessary for its apical membrane sorting. Interacts (via the C-terminal PDZ-binding motif DTHL) with NHERF2 (via the PDZ 1 domain); interaction is detected in glomerular epithelium cells. Interacts with EZR. In terms of processing, N- and O-linked glycosylated. Sialoglycoprotein. Glomerular epithelium cell (podocyte) and endothelial cells.

The protein resides in the apical cell membrane. The protein localises to the cell projection. It is found in the microvillus. It localises to the membrane raft. Its subcellular location is the lamellipodium. The protein resides in the filopodium. The protein localises to the ruffle. It is found in the membrane. In terms of biological role, involved in the regulation of both adhesion and cell morphology and cancer progression. Functions as an anti-adhesive molecule that maintains an open filtration pathway between neighboring foot processes in the podocyte by charge repulsion. Acts as a pro-adhesive molecule, enhancing the adherence of cells to immobilized ligands, increasing the rate of migration and cell-cell contacts in an integrin-dependent manner. Induces the formation of apical actin-dependent microvilli. Involved in the formation of a preapical plasma membrane subdomain to set up initial epithelial polarization and the apical lumen formation during renal tubulogenesis. Plays a role in cancer development and aggressiveness by inducing cell migration and invasion through its interaction with the actin-binding protein EZR. Affects EZR-dependent signaling events, leading to increased activities of the MAPK and PI3K pathways in cancer cells. This is Podocalyxin (PODXL) from Oryctolagus cuniculus (Rabbit).